Here is a 1235-residue protein sequence, read N- to C-terminus: High-affinity potassium transport protein (1235 aa).

At Ser15 the chain carries Phosphoserine. 2 consecutive transmembrane segments (helical) span residues 49 to 70 (SFIA…ILLY) and 78 to 98 (IDTL…TVDI). A glycan (N-linked (GlcNAc...) asparagine) is linked at Asn100. Residues 107-127 (IVLYIVCCISTPIAVHSCLAF) form a helical membrane-spanning segment. Disordered stretches follow at residues 161-310 (LTAR…SPAD), 323-344 (EATA…GTRY), 361-441 (KIKI…TKPP), and 488-565 (RLST…HQLQ). A compositionally biased stretch (polar residues) spans 164–179 (RTMTKNRTGTQRTSYP). An N-linked (GlcNAc...) asparagine glycan is attached at Asn169. The segment covering 198–217 (VNRDEQDSVHSDQNSHDISR) has biased composition (basic and acidic residues). The span at 219 to 232 (SSNNNTNHNGSSGS) shows a compositional bias: low complexity. N-linked (GlcNAc...) asparagine glycosylation is found at Asn222 and Asn227. Acidic residues predominate over residues 237-247 (VKEDETDDNGE). Residues 248–274 (YQENNSYSTVGSSSNTVADESLNQKPK) are compositionally biased toward polar residues. Asn251 is a glycosylation site (N-linked (GlcNAc...) asparagine). Residues Asn369 and Asn383 are each glycosylated (N-linked (GlcNAc...) asparagine). Composition is skewed to polar residues over residues 370–415 (ESNT…SNSG) and 490–502 (STGS…SNNV). Ser414 carries the post-translational modification Phosphoserine. Residues Asn497, Asn501, and Asn532 are each glycosylated (N-linked (GlcNAc...) asparagine). The segment covering 510 to 539 (DMDDDDDDDDNDGDNNEEYFADNESGDEDE) has biased composition (acidic residues). Ser534 carries the phosphoserine modification. Basic and acidic residues predominate over residues 540-563 (RVQQSEPHSDSELKSHQQQQEKHQ). 2 N-linked (GlcNAc...) asparagine glycosylation sites follow: Asn580 and Asn677. The interval 671–706 (HDGSHKNGSEEASSDSNENIYSTNGGSDHNGLNNYP) is disordered. Positions 680 to 706 (EEASSDSNENIYSTNGGSDHNGLNNYP) are enriched in polar residues. 5 helical membrane-spanning segments follow: residues 778–800 (ILVV…WIIL), 813–834 (VSPT…GLTL), 838–858 (SMMS…FIII), 862–882 (GFPI…PDLS), and 898–918 (CFTL…LAGL). The N-linked (GlcNAc...) asparagine glycan is linked to Asn919. 2 helical membrane-spanning segments follow: residues 923–943 (WILF…SKGY) and 971–991 (SIQV…AISI). The segment at 1003–1063 (GLYGDMGGEP…KKKKKTENPN (61 aa)) is disordered. A compositionally biased stretch (acidic residues) spans 1010-1031 (GEPEDTDTEDDGNDEDDDEENE). Asn1030 carries an N-linked (GlcNAc...) asparagine glycan. The segment covering 1036 to 1049 (QSSQRSSSNNNNNN) has biased composition (low complexity). The next 2 membrane-spanning stretches (helical) occupy residues 1078–1098 (QLSF…ICEG) and 1111–1131 (IFAI…SLGY). A glycan (N-linked (GlcNAc...) asparagine) is linked at Asn1135.

This sequence belongs to the TrkH potassium transport family.

It is found in the membrane. Its function is as follows. This protein is required for high-affinity potassium transport. This Saccharomyces cerevisiae (strain ATCC 204508 / S288c) (Baker's yeast) protein is High-affinity potassium transport protein (TRK1).